A 355-amino-acid polypeptide reads, in one-letter code: Uroporphyrinogen decarboxylase (355 aa).

Substrate is bound by residues 27–31, aspartate 77, tyrosine 154, threonine 209, and histidine 328; that span reads RQAGR.

It belongs to the uroporphyrinogen decarboxylase family. As to quaternary structure, homodimer.

It localises to the cytoplasm. The enzyme catalyses uroporphyrinogen III + 4 H(+) = coproporphyrinogen III + 4 CO2. Its pathway is porphyrin-containing compound metabolism; protoporphyrin-IX biosynthesis; coproporphyrinogen-III from 5-aminolevulinate: step 4/4. Catalyzes the decarboxylation of four acetate groups of uroporphyrinogen-III to yield coproporphyrinogen-III. The protein is Uroporphyrinogen decarboxylase of Aliivibrio fischeri (strain ATCC 700601 / ES114) (Vibrio fischeri).